The following is a 589-amino-acid chain: Serine/threonine-protein phosphatase 2A 65 kDa regulatory subunit A alpha isoform (589 aa).

N-acetylalanine is present on alanine 2. 15 HEAT repeats span residues 8 to 46 (DSLY…GVER), 47 to 84 (TRSE…GGPE), 85 to 123 (YVHC…SPSD), 124 to 161 (LEAH…VSSA), 162 to 200 (VKAE…ELDN), 201 to 239 (VKSE…PQED), 240 to 278 (LEAL…GPEI), 279 to 321 (TKTD…RENV), 322 to 360 (IMTQ…GKDN), 361 to 399 (TIEH…GIRQ), 400 to 438 (LSQS…GVEF), 439 to 477 (FDEK…GKEW), 478 to 516 (AHAT…GQDI), 517 to 555 (TTKH…DNST), and 556 to 589 (LQSE…LSLA). Lysine 280 bears the N6-acetyllysine mark.

This sequence belongs to the phosphatase 2A regulatory subunit A family. As to quaternary structure, PP2A consists of a common heterodimeric core enzyme, composed of PPP2CA a 36 kDa catalytic subunit (subunit C) and PPP2R1A a 65 kDa constant regulatory subunit (PR65 or subunit A), that associates with a variety of regulatory subunits. Proteins that associate with the core dimer include three families of regulatory subunits B (the R2/B/PR55/B55, R3/B''/PR72/PR130/PR59 and R5/B'/B56 families), the 48 kDa variable regulatory subunit, viral proteins, and cell signaling molecules. Found in a complex with at least ARL2, PPP2CB, PPP2R1A, PPP2R2A, PPP2R5E and TBCD. Interacts with the PP2A C catalytic subunit PPP2CA. Interacts with the PP2A B subunit PPP2R2A. Interacts with the PP2A B subunit PPP2R5D. Interacts with FOXO1; the interaction dephosphorylates FOXO1 on AKT-mediated phosphorylation sites. Interacts with IPO9. Interacts with TP53 and SGO1. Interacts with PLA2G16; this interaction might decrease PP2A activity. Interacts with CTTNBP2NL. Interacts with GNA12; the interaction promotes protein phosphatase 2A activation causing dephosphorylation of MAPT. Interacts with CIP2A; this interaction stabilizes CIP2A. Interacts with PABIR1/FAM122A. Interacts with ADCY8; antagonizes interaction between ADCY8 and calmodulin. Interacts with CRTC3 (when phosphorylated at 'Ser-391'). Interacts with SPRY2. Part of the core of STRIPAK complexes composed of PP2A catalytic and scaffolding subunits, the striatins (PP2A regulatory subunits), the striatin-associated proteins MOB4, STRIP1 and STRIP2, PDCD10 and members of the STE20 kinases, such as STK24 and STK26. Component of the Integrator-PP2A (INTAC) complex, composed of the Integrator core complex and protein phosphatase 2A subunits PPP2CA and PPP2R1A.

The protein resides in the cytoplasm. The protein localises to the nucleus. It localises to the chromosome. It is found in the centromere. Its subcellular location is the lateral cell membrane. The protein resides in the cell projection. The protein localises to the dendrite. Functionally, the PR65 subunit of protein phosphatase 2A serves as a scaffolding molecule to coordinate the assembly of the catalytic subunit and a variable regulatory B subunit. Upon interaction with GNA12 promotes dephosphorylation of microtubule associated protein TAU/MAPT. Required for proper chromosome segregation and for centromeric localization of SGO1 in mitosis. Together with RACK1 adapter, mediates dephosphorylation of AKT1 at 'Ser-473', preventing AKT1 activation and AKT-mTOR signaling pathway. Dephosphorylation of AKT1 is essential for regulatory T-cells (Treg) homeostasis and stability. Part of the striatin-interacting phosphatase and kinase (STRIPAK) complexes. STRIPAK complexes have critical roles in protein (de)phosphorylation and are regulators of multiple signaling pathways including Hippo, MAPK, nuclear receptor and cytoskeleton remodeling. Different types of STRIPAK complexes are involved in a variety of biological processes such as cell growth, differentiation, apoptosis, metabolism and immune regulation. Key mediator of a quality checkpoint during transcription elongation as part of the Integrator-PP2A (INTAC) complex. The INTAC complex drives premature transcription termination of transcripts that are unfavorably configured for transcriptional elongation: within the INTAC complex, acts as a scaffolding subunit for PPP2CA, which catalyzes dephosphorylation of the C-terminal domain (CTD) of Pol II subunit POLR2A/RPB1 and SUPT5H/SPT5, thereby preventing transcriptional elongation. Regulates the recruitment of the SKA complex to kinetochores. This Mus musculus (Mouse) protein is Serine/threonine-protein phosphatase 2A 65 kDa regulatory subunit A alpha isoform (Ppp2r1a).